The following is a 350-amino-acid chain: Nuclear pore complex-interacting protein family member A1 (350 aa).

Residues 306–325 (KTPPECLLTPLPPSAPPSVD) are disordered.

It belongs to the NPIP family. As to quaternary structure, may associate with the nuclear pore complex. As to expression, widely expressed.

The protein resides in the nucleus. Its subcellular location is the nuclear pore complex. It localises to the nucleus membrane. The sequence is that of Nuclear pore complex-interacting protein family member A1 (NPIPA1) from Homo sapiens (Human).